A 194-amino-acid polypeptide reads, in one-letter code: Lysozyme g (194 aa).

Residues Glu-71 and Asp-84 contribute to the active site.

Belongs to the glycosyl hydrolase 23 family. In terms of tissue distribution, expressed in intestine, liver, spleen, anterior kidney, posterior kidney, heart, gill, muscle and leukocytes.

It carries out the reaction Hydrolysis of (1-&gt;4)-beta-linkages between N-acetylmuramic acid and N-acetyl-D-glucosamine residues in a peptidoglycan and between N-acetyl-D-glucosamine residues in chitodextrins.. Functionally, has lytic activity against M.lysodeikticus, V.alginolyticus from Epinephelus fario, V.vulnificus from culture water, A.hydrophila from soft-shell turtle, A.hydrophila from goldfish and V.parahaemolyticus, P.fluorescens and V.fluvialis from culture water. The protein is Lysozyme g of Epinephelus coioides (Orange-spotted grouper).